The sequence spans 721 residues: Catalase-peroxidase 1 (721 aa).

Positions 98 to 223 (WHAAGSYRVA…LAAVQMGLIY (126 aa)) form a cross-link, tryptophyl-tyrosyl-methioninium (Trp-Tyr) (with M-249). Residue His99 is the Proton acceptor of the active site. A cross-link (tryptophyl-tyrosyl-methioninium (Tyr-Met) (with W-98)) is located at residues 223–249 (YVNPEGVNGQPDPLRTAQDVRVTFGRM). His264 is a heme b binding site.

Belongs to the peroxidase family. Peroxidase/catalase subfamily. In terms of assembly, homodimer or homotetramer. Requires heme b as cofactor. In terms of processing, formation of the three residue Trp-Tyr-Met cross-link is important for the catalase, but not the peroxidase activity of the enzyme.

It carries out the reaction H2O2 + AH2 = A + 2 H2O. The enzyme catalyses 2 H2O2 = O2 + 2 H2O. In terms of biological role, bifunctional enzyme with both catalase and broad-spectrum peroxidase activity. The sequence is that of Catalase-peroxidase 1 from Legionella pneumophila subsp. pneumophila (strain Philadelphia 1 / ATCC 33152 / DSM 7513).